Reading from the N-terminus, the 588-residue chain is Aspartate--tRNA ligase (588 aa).

E174 contacts L-aspartate. The aspartate stretch occupies residues 198–201; the sequence is QLFK. L-aspartate is bound at residue R220. ATP-binding positions include 220 to 222 and Q229; that span reads RDE. An L-aspartate-binding site is contributed by H448. E482 contributes to the ATP binding site. Residue R489 participates in L-aspartate binding. ATP is bound at residue 534–537; that stretch reads GIDR.

It belongs to the class-II aminoacyl-tRNA synthetase family. Type 1 subfamily. As to quaternary structure, homodimer.

The protein resides in the cytoplasm. It catalyses the reaction tRNA(Asp) + L-aspartate + ATP = L-aspartyl-tRNA(Asp) + AMP + diphosphate. In terms of biological role, catalyzes the attachment of L-aspartate to tRNA(Asp) in a two-step reaction: L-aspartate is first activated by ATP to form Asp-AMP and then transferred to the acceptor end of tRNA(Asp). This is Aspartate--tRNA ligase from Xanthomonas euvesicatoria pv. vesicatoria (strain 85-10) (Xanthomonas campestris pv. vesicatoria).